The primary structure comprises 370 residues: sn-glycerol-3-phosphate import ATP-binding protein UgpC (370 aa).

Positions 4 to 236 constitute an ABC transporter domain; that stretch reads LSLKNIAKRY…PATAFVAAFM (233 aa). 38 to 45 is an ATP binding site; that stretch reads GPSGCGKS.

Belongs to the ABC transporter superfamily. sn-glycerol-3-phosphate importer (TC 3.A.1.1.3) family. As to quaternary structure, the complex is composed of two ATP-binding proteins (UgpC), two transmembrane proteins (UgpA and UgpE) and a solute-binding protein (UgpB).

It localises to the cell inner membrane. It carries out the reaction sn-glycerol 3-phosphate(out) + ATP + H2O = sn-glycerol 3-phosphate(in) + ADP + phosphate + H(+). Its function is as follows. Part of the ABC transporter complex UgpBAEC involved in sn-glycerol-3-phosphate (G3P) import. Responsible for energy coupling to the transport system. The chain is sn-glycerol-3-phosphate import ATP-binding protein UgpC from Chromobacterium violaceum (strain ATCC 12472 / DSM 30191 / JCM 1249 / CCUG 213 / NBRC 12614 / NCIMB 9131 / NCTC 9757 / MK).